A 381-amino-acid chain; its full sequence is tRNA pseudouridine synthase D (381 aa).

The active-site Nucleophile is the Asp-81. The 176-residue stretch at Gly-160–Val-335 folds into the TRUD domain.

It belongs to the pseudouridine synthase TruD family.

It catalyses the reaction uridine(13) in tRNA = pseudouridine(13) in tRNA. Its function is as follows. Responsible for synthesis of pseudouridine from uracil-13 in transfer RNAs. The protein is tRNA pseudouridine synthase D of Helicobacter acinonychis (strain Sheeba).